Here is a 169-residue protein sequence, read N- to C-terminus: Protein Flattop homolog (169 aa).

Positions 53 to 169 (IPRSSRSPWG…SPKLATPEPC (117 aa)) are disordered. Positions 119–130 (VQASPRNASPLQ) are enriched in polar residues.

Belongs to the Flattop family.

It is found in the cytoplasm. The protein resides in the cytoskeleton. The protein localises to the cilium basal body. It localises to the cell projection. Its subcellular location is the cilium. It is found in the apical cell membrane. Its function is as follows. Acts as a regulator of cilium basal body docking and positioning in mono- and multiciliated cells. This chain is Protein Flattop homolog, found in Nematostella vectensis (Starlet sea anemone).